The sequence spans 504 residues: Malonyl-CoA decarboxylase, mitochondrial (504 aa).

The N-terminal 50 residues, 1–50 (MRGLRRGLSRLGPRLGPWAVPRSLRRVLRAAGPWRGQSSAGSVSERGGAS), are a transit peptide targeting the mitochondrion. Positions 51–201 (MEEVLSRSVP…VLKNMLSEWF (151 aa)) are alpha-helical domain. The segment at 202–504 (STGFLNLERV…VSQFQQNSKL (303 aa)) is catalytic domain. Ser340 acts as the Proton acceptor in catalysis. Residue His434 is the Proton donor of the active site. The short motif at 502–504 (SKL) is the Microbody targeting signal element.

The protein localises to the mitochondrion. Its subcellular location is the cytoplasm. The protein resides in the peroxisome. It carries out the reaction malonyl-CoA + H(+) = acetyl-CoA + CO2. Its pathway is metabolic intermediate biosynthesis; acetyl-CoA biosynthesis; acetyl-CoA from malonyl-CoA: step 1/1. In terms of biological role, catalyzes the conversion of malonyl-CoA to acetyl-CoA. In the fatty acid biosynthesis MCD selectively removes malonyl-CoA and thus assures that methyl-malonyl-CoA is the only chain elongating substrate for fatty acid synthase and that fatty acids with multiple methyl side chains are produced. In Anser anser anser (Western greylag goose), this protein is Malonyl-CoA decarboxylase, mitochondrial (MLYCD).